Here is a 322-residue protein sequence, read N- to C-terminus: Methionyl-tRNA formyltransferase (322 aa).

112–115 (SLLP) provides a ligand contact to (6S)-5,6,7,8-tetrahydrofolate.

The protein belongs to the Fmt family.

It catalyses the reaction L-methionyl-tRNA(fMet) + (6R)-10-formyltetrahydrofolate = N-formyl-L-methionyl-tRNA(fMet) + (6S)-5,6,7,8-tetrahydrofolate + H(+). Functionally, attaches a formyl group to the free amino group of methionyl-tRNA(fMet). The formyl group appears to play a dual role in the initiator identity of N-formylmethionyl-tRNA by promoting its recognition by IF2 and preventing the misappropriation of this tRNA by the elongation apparatus. The chain is Methionyl-tRNA formyltransferase from Synechococcus sp. (strain JA-3-3Ab) (Cyanobacteria bacterium Yellowstone A-Prime).